Here is a 219-residue protein sequence, read N- to C-terminus: Large ribosomal subunit protein uL16y (219 aa).

Belongs to the universal ribosomal protein uL16 family. Component of the small ribosomal subunit. Mature ribosomes consist of a small (40S) and a large (60S) subunit. The 40S subunit contains about 33 different proteins and 1 molecule of RNA (18S). The 60S subunit contains about 49 different proteins and 3 molecules of RNA (25S, 5.8S and 5S).

This chain is Large ribosomal subunit protein uL16y (SG12), found in Oryza sativa subsp. japonica (Rice).